A 159-amino-acid polypeptide reads, in one-letter code: Deoxyuridine 5'-triphosphate nucleotidohydrolase (159 aa).

Residues 78 to 80 (RSG), Asn91, 95 to 97 (LID), and Met105 each bind substrate.

Belongs to the dUTPase family. Mg(2+) is required as a cofactor.

The catalysed reaction is dUTP + H2O = dUMP + diphosphate + H(+). The protein operates within pyrimidine metabolism; dUMP biosynthesis; dUMP from dCTP (dUTP route): step 2/2. Functionally, this enzyme is involved in nucleotide metabolism: it produces dUMP, the immediate precursor of thymidine nucleotides and it decreases the intracellular concentration of dUTP so that uracil cannot be incorporated into DNA. The chain is Deoxyuridine 5'-triphosphate nucleotidohydrolase from Buchnera aphidicola subsp. Schizaphis graminum (strain Sg).